The sequence spans 23 residues: Potassium channel toxin alpha-KTx 13.3 (23 aa).

Cystine bridges form between Cys-2-Cys-15, Cys-5-Cys-20, and Cys-9-Cys-22. The interaction with Ca(2+)-activated K(+) channels stretch occupies residues 13–20; sequence GKCINGRC. Residue Tyr-23 is modified to Tyrosine amide.

Expressed by the venom gland.

Its subcellular location is the secreted. Functionally, reversibly blocks Shaker B potassium channels, with a dissociation constant of 200 nM. This Tityus pachyurus (Colombian scorpion) protein is Potassium channel toxin alpha-KTx 13.3.